The following is a 1511-amino-acid chain: DNA-directed RNA polymerase subunit beta' (1511 aa).

Zn(2+) is bound by residues cysteine 75, cysteine 77, cysteine 90, and cysteine 93. Residues aspartate 474, aspartate 476, and aspartate 478 each contribute to the Mg(2+) site. 4 residues coordinate Zn(2+): cysteine 804, cysteine 878, cysteine 885, and cysteine 888.

Belongs to the RNA polymerase beta' chain family. In terms of assembly, the RNAP catalytic core consists of 2 alpha, 1 beta, 1 beta' and 1 omega subunit. When a sigma factor is associated with the core the holoenzyme is formed, which can initiate transcription. Requires Mg(2+) as cofactor. It depends on Zn(2+) as a cofactor.

The enzyme catalyses RNA(n) + a ribonucleoside 5'-triphosphate = RNA(n+1) + diphosphate. In terms of biological role, DNA-dependent RNA polymerase catalyzes the transcription of DNA into RNA using the four ribonucleoside triphosphates as substrates. This Aliarcobacter butzleri (strain RM4018) (Arcobacter butzleri) protein is DNA-directed RNA polymerase subunit beta'.